The following is a 211-amino-acid chain: MGQKSNPIGLRLKIINTWDSLWYANKDYTTKLHEDFLLRKFIKKAFYHASISKVVIARKVDVIMVNVYSAKPGVIIGKKGADIDKVKQKIVKMINNNIELNIIEVKKPELKAILIAENIAQQLERRVSFRRAMKRSVQSCLKIGAKGIKVSCAGRLGGAEIARTEWYKEGSVPLHTFRANIDYGFSEAKTIYGIIGVKVWVYLGETKSSNE.

The KH type-2 domain occupies Leu38–Lys106.

Belongs to the universal ribosomal protein uS3 family. As to quaternary structure, part of the 30S ribosomal subunit. Forms a tight complex with proteins S10 and S14.

Functionally, binds the lower part of the 30S subunit head. Binds mRNA in the 70S ribosome, positioning it for translation. This is Small ribosomal subunit protein uS3 from Ehrlichia ruminantium (strain Gardel).